Consider the following 323-residue polypeptide: tRNA N6-adenosine threonylcarbamoyltransferase (323 aa).

Positions 106, 110, and 127 each coordinate Fe cation. Residues 127 to 131 (YVSGA), D159, G172, E176, and N255 contribute to the substrate site. Residue D283 participates in Fe cation binding.

The protein belongs to the KAE1 / TsaD family. As to quaternary structure, monomer. Component of the KEOPS complex that consists of Kae1, Bud32, Cgi121 and Pcc1; the whole complex dimerizes. Fe(2+) is required as a cofactor.

The protein localises to the cytoplasm. It catalyses the reaction L-threonylcarbamoyladenylate + adenosine(37) in tRNA = N(6)-L-threonylcarbamoyladenosine(37) in tRNA + AMP + H(+). Functionally, required for the formation of a threonylcarbamoyl group on adenosine at position 37 (t(6)A37) in tRNAs that read codons beginning with adenine. Is a component of the KEOPS complex that is probably involved in the transfer of the threonylcarbamoyl moiety of threonylcarbamoyl-AMP (TC-AMP) to the N6 group of A37. Kae1 likely plays a direct catalytic role in this reaction, but requires other protein(s) of the complex to fulfill this activity. In Methanocella arvoryzae (strain DSM 22066 / NBRC 105507 / MRE50), this protein is tRNA N6-adenosine threonylcarbamoyltransferase.